A 117-amino-acid chain; its full sequence is MAYSKLGRTSSQRKALLRDLATDLIINERIQTTEQKAKELRPVVEKLITLGKRGDLHARRQVASFVRKENAGEKDAIQKLFEDVAPRYAERQGGYTRIMKVGPRRGDGAEVVIIELV.

It belongs to the bacterial ribosomal protein bL17 family. In terms of assembly, part of the 50S ribosomal subunit. Contacts protein L32.

This is Large ribosomal subunit protein bL17 from Exiguobacterium sp. (strain ATCC BAA-1283 / AT1b).